We begin with the raw amino-acid sequence, 121 residues long: Immunoglobulin kappa variable 4-1 (121 aa).

The N-terminal stretch at methionine 1–glycine 20 is a signal peptide. A framework-1 region spans residues aspartate 21 to cysteine 43. The Ig-like domain maps to aspartate 21–proline 121. An intrachain disulfide couples cysteine 43 to cysteine 114. The tract at residues lysine 44–alanine 60 is complementarity-determining-1. Residues tryptophan 61 to tyrosine 75 form a framework-2 region. Residues tryptophan 76 to serine 82 form a complementarity-determining-2 region. Positions glycine 83 to cysteine 114 are framework-3. The complementarity-determining-3 stretch occupies residues glutamine 115–proline 121.

As to quaternary structure, immunoglobulins are composed of two identical heavy chains and two identical light chains; disulfide-linked.

Its subcellular location is the secreted. It localises to the cell membrane. V segment of the variable domain of immunoglobulins light chain that participates in the antigen recognition. Immunoglobulins, also known as antibodies, are membrane-bound or secreted glycoproteins produced by B lymphocytes. In the recognition phase of humoral immunity, the membrane-bound immunoglobulins serve as receptors which, upon binding of a specific antigen, trigger the clonal expansion and differentiation of B lymphocytes into immunoglobulins-secreting plasma cells. Secreted immunoglobulins mediate the effector phase of humoral immunity, which results in the elimination of bound antigens. The antigen binding site is formed by the variable domain of one heavy chain, together with that of its associated light chain. Thus, each immunoglobulin has two antigen binding sites with remarkable affinity for a particular antigen. The variable domains are assembled by a process called V-(D)-J rearrangement and can then be subjected to somatic hypermutations which, after exposure to antigen and selection, allow affinity maturation for a particular antigen. In Homo sapiens (Human), this protein is Immunoglobulin kappa variable 4-1.